Reading from the N-terminus, the 225-residue chain is Protein GrpE (225 aa).

Residues 1–15 (MSGDASTPEQDQNVV) show a composition bias toward polar residues. Disordered stretches follow at residues 1-48 (MSGD…DRMQ) and 198-225 (VSMGPGPSDPGSAPAEAAAAPDQTAEEA). Positions 201 to 225 (GPGPSDPGSAPAEAAAAPDQTAEEA) are enriched in low complexity.

The protein belongs to the GrpE family. Homodimer.

Its subcellular location is the cytoplasm. Functionally, participates actively in the response to hyperosmotic and heat shock by preventing the aggregation of stress-denatured proteins, in association with DnaK and GrpE. It is the nucleotide exchange factor for DnaK and may function as a thermosensor. Unfolded proteins bind initially to DnaJ; upon interaction with the DnaJ-bound protein, DnaK hydrolyzes its bound ATP, resulting in the formation of a stable complex. GrpE releases ADP from DnaK; ATP binding to DnaK triggers the release of the substrate protein, thus completing the reaction cycle. Several rounds of ATP-dependent interactions between DnaJ, DnaK and GrpE are required for fully efficient folding. This Synechococcus sp. (strain CC9605) protein is Protein GrpE.